A 1668-amino-acid chain; its full sequence is Chitin synthase chs-2 (1668 aa).

Positions 1 to 19 (MMNTLDHRPLGRMETMEGK) are enriched in basic and acidic residues. The segment at 1–51 (MMNTLDHRPLGRMETMEGKPDEDEVPTSSNSDAKGKGYYYSSGTVPTDDST) is disordered. The Cytoplasmic segment spans residues 1-116 (MMNTLDHRPL…HGFWHDASLQ (116 aa)). Residues 117–137 (VLKLATFLVLFLLTLGSAVVA) form a helical membrane-spanning segment. The Extracellular segment spans residues 138 to 176 (KSTFILMTSAIGWGGQTITICNQVISEATQNTVKLKNAH). The helical transmembrane segment at 177 to 197 (VVKWVWATLLALSAPEALCFV) threads the bilayer. At 198–212 (RSMHRTMFRNVKRPT) the chain is on the cytoplasmic side. Residues 213-233 (FIQFVFVLIIETFHSIGVGIL) form a helical membrane-spanning segment. At 234–242 (VFRIFPDLD) the chain is on the extracellular side. The helical transmembrane segment at 243–263 (AVTAAQLTNAMCFVPAILSVI) threads the bilayer. The Cytoplasmic portion of the chain corresponds to 264–271 (SRKPNKSA). The helical transmembrane segment at 272–292 (LLLVIIDFAAIAAQSSGFWAL) threads the bilayer. At 293–301 (PMFLPNLQK) the chain is on the extracellular side. Residues 302 to 322 (HLVAIPVSLTLISLAWWQNFV) form a helical membrane-spanning segment. Topologically, residues 323-347 (HRDSVFPPVRTLAKFAQRLSERRSK) are cytoplasmic. Residues 348 to 368 (TYAFVSLWKICIYVVCCFLFI) form a helical membrane-spanning segment. Residues 369–487 (SSRMKIEDML…IYSNYVERNQ (119 aa)) are Extracellular-facing. An N-linked (GlcNAc...) asparagine glycan is attached at Asn-396. A helical membrane pass occupies residues 488–508 (LTMAYDALWLVIFQFGAVFVC). Over 509-522 (YHSSKFACKVMMQR) the chain is Cytoplasmic. Residues 523 to 543 (MGFALPMALSVPVTVLLLSTN) form a helical membrane-spanning segment. Topologically, residues 544–576 (CRMRQKDSCYGTNVLTVELFWQCNGASMSLADF) are extracellular. The chain crosses the membrane as a helical span at residues 577 to 597 (ILTPQTWIWLCWLASQFWITI). Over 598–1045 (HLWNPKHERL…ISIWYIIYQL (448 aa)) the chain is Cytoplasmic. A helical membrane pass occupies residues 1046-1066 (VMLISSILGPGTIFVMIIGAI). Over 1067 to 1074 (SISFSIDT) the chain is Extracellular. A helical transmembrane segment spans residues 1075–1095 (LISLVIVSIPVVVFIVVCLTA). The Cytoplasmic segment spans residues 1096–1100 (KPEHQ). The helical transmembrane segment at 1101 to 1121 (LICAQTIGAIFAMLMTAVVVG) threads the bilayer. The Extracellular portion of the chain corresponds to 1122-1136 (TSLQLQKDGLLSPHS). Residues 1137–1157 (MFTVAVATSFLTAAILHPLEF) traverse the membrane as a helical segment. Thr-1158 is a topological domain (cytoplasmic). A helical membrane pass occupies residues 1159 to 1179 (CIIPGTIYFLAIPCMYMLLPI). Residues 1180–1375 (YSVCNMHTVS…RAGLIAIRNS (196 aa)) lie on the Extracellular side of the membrane. Residues 1192–1216 (TREDPRPTEKNTLAKKTPGNLESGD) form a disordered region. A coiled-coil region spans residues 1280–1335 (QIDKCSEADEDEQAEIEDALEMSNQSHAAKKNQKWKQAQSEAWLADKALKRAEREY). N-linked (GlcNAc...) asparagine glycosylation is present at Asn-1303. Residues 1376–1396 (HTVYFLMINIVFIISVLVLQI) form a helical membrane-spanning segment. At 1397–1440 (HKDCLNIEWPLGPKFNHTVRPCYANHDDNQKEEVWVMTRLQLEP) the chain is on the cytoplasmic side. The chain crosses the membrane as a helical span at residues 1441 to 1461 (IGLVFLIFFVSILVIQFLAML). Topologically, residues 1462-1668 (CHRFGTLAHI…SSGDVELRRF (207 aa)) are extracellular. The tract at residues 1625–1668 (RLFTAQQDQNSPTSDGNRRKSNSRPWDQPTSSATSSGDVELRRF) is disordered. 2 stretches are compositionally biased toward polar residues: residues 1628–1639 (TAQQDQNSPTSD) and 1647–1661 (SRPW…TSSG).

Belongs to the chitin synthase family. Class IV subfamily.

The protein resides in the cell membrane. The catalysed reaction is [(1-&gt;4)-N-acetyl-beta-D-glucosaminyl](n) + UDP-N-acetyl-alpha-D-glucosamine = [(1-&gt;4)-N-acetyl-beta-D-glucosaminyl](n+1) + UDP + H(+). May be involved in chitin synthesis in the pharynx during larval development. This Caenorhabditis elegans protein is Chitin synthase chs-2.